The chain runs to 765 residues: Membrane metallo-endopeptidase-like 1 (765 aa).

Residues 1–19 (MVERAGWCRKKSPGFVEYG) are Cytoplasmic-facing. A helical; Signal-anchor for type II membrane protein transmembrane segment spans residues 20–40 (LMVLLLLLLGAIVTLGVFYSI). The Lumenal segment spans residues 41–765 (GKQLPLLTSL…MHPMKRCRIW (725 aa)). The 692-residue stretch at 74–765 (ICTTPSCVIA…MHPMKRCRIW (692 aa)) folds into the Peptidase M13 domain. Intrachain disulfides connect Cys-75/Cys-80, Cys-98/Cys-750, Cys-106/Cys-710, Cys-161/Cys-425, and Cys-636/Cys-762. Arg-121 is an a peptide binding site. Residues Asn-163, Asn-279, Asn-303, and Asn-336 are each glycosylated (N-linked (GlcNAc...) asparagine). A coiled-coil region spans residues 523 to 549 (FENGLQNLKNNAQRSLKKLREKVDQNL). Zn(2+) is bound at residue His-599. Glu-600 is a catalytic residue. Residues His-603 and Glu-662 each contribute to the Zn(2+) site. The active-site Proton donor is Asp-666. Asn-694 is a glycosylation site (N-linked (GlcNAc...) asparagine).

It belongs to the peptidase M13 family. It depends on Zn(2+) as a cofactor. N-glycosylated. Highly expressed in testis. Also expressed in ovary. Weakly or not expressed in brain, lung, heart, liver, kidney, adrenal gland and intestine.

It is found in the membrane. The protein localises to the secreted. The enzyme catalyses Preferential cleavage of polypeptides between hydrophobic residues, particularly with Phe or Tyr at P1'.. Its activity is regulated as follows. Inhibited by thiorphan and phosphoramidon. Functionally, metalloprotease involved in sperm function, possibly by modulating the processes of fertilization and early embryonic development. Degrades a broad variety of small peptides with a preference for peptides shorter than 3 kDa containing neutral bulky aliphatic or aromatic amino acid residues. Shares the same substrate specificity with MME and cleaves peptides at the same amide bond. This is Membrane metallo-endopeptidase-like 1 (Mmel1) from Mus musculus (Mouse).